We begin with the raw amino-acid sequence, 258 residues long: Neurotrophin-3 (258 aa).

The first 18 residues, 1-18, serve as a signal peptide directing secretion; it reads MSILFYVIFLAYLRGIQG. A propeptide spanning residues 19 to 139 is cleaved from the precursor; it reads NSMDQRSLPE…ANRTSPRRKR (121 aa). A disordered region spans residues 60–85; sequence QSTLPKAEAPREPEQGEATRSEFQPM. Positions 67–79 are enriched in basic and acidic residues; the sequence is EAPREPEQGEATR. An N-linked (GlcNAc...) asparagine glycan is attached at N131. 3 cysteine pairs are disulfide-bonded: C153–C218, C196–C247, and C206–C249.

It belongs to the NGF-beta family. In terms of tissue distribution, brain and peripheral tissues.

It localises to the secreted. Functionally, seems to promote the survival of visceral and proprioceptive sensory neurons. This Mus musculus (Mouse) protein is Neurotrophin-3 (Ntf3).